A 599-amino-acid polypeptide reads, in one-letter code: Elongation factor 4 (599 aa).

The tr-type G domain maps to 4–186; it reads SKIRNFSIIA…SIVEKVPAPK (183 aa). GTP is bound by residues 16 to 21 and 133 to 136; these read DHGKST and NKVD.

Belongs to the TRAFAC class translation factor GTPase superfamily. Classic translation factor GTPase family. LepA subfamily.

Its subcellular location is the cell inner membrane. The catalysed reaction is GTP + H2O = GDP + phosphate + H(+). In terms of biological role, required for accurate and efficient protein synthesis under certain stress conditions. May act as a fidelity factor of the translation reaction, by catalyzing a one-codon backward translocation of tRNAs on improperly translocated ribosomes. Back-translocation proceeds from a post-translocation (POST) complex to a pre-translocation (PRE) complex, thus giving elongation factor G a second chance to translocate the tRNAs correctly. Binds to ribosomes in a GTP-dependent manner. This is Elongation factor 4 from Syntrophotalea carbinolica (strain DSM 2380 / NBRC 103641 / GraBd1) (Pelobacter carbinolicus).